An 876-amino-acid chain; its full sequence is Valine--tRNA ligase (876 aa).

A 'HIGH' region motif is present at residues 43–53; it reads PNVTGVLHMGH. The short motif at 532-536 is the 'KMSKS' region element; the sequence is KMSKS. Lysine 535 provides a ligand contact to ATP. 2 coiled-coil regions span residues 805-826 and 853-875; these read GNMIDVDAEIARMEAELKHKEG and RKKQADAESIIQSLKESIASLKN.

Belongs to the class-I aminoacyl-tRNA synthetase family. ValS type 1 subfamily. Monomer.

The protein localises to the cytoplasm. It catalyses the reaction tRNA(Val) + L-valine + ATP = L-valyl-tRNA(Val) + AMP + diphosphate. Its function is as follows. Catalyzes the attachment of valine to tRNA(Val). As ValRS can inadvertently accommodate and process structurally similar amino acids such as threonine, to avoid such errors, it has a 'posttransfer' editing activity that hydrolyzes mischarged Thr-tRNA(Val) in a tRNA-dependent manner. This Bacteroides fragilis (strain ATCC 25285 / DSM 2151 / CCUG 4856 / JCM 11019 / LMG 10263 / NCTC 9343 / Onslow / VPI 2553 / EN-2) protein is Valine--tRNA ligase.